The following is a 300-amino-acid chain: tRNA U34 carboxymethyltransferase (300 aa).

Carboxy-S-adenosyl-L-methionine contacts are provided by residues lysine 73, tryptophan 87, lysine 92, glycine 111, 133–135 (DPS), 160–161 (VE), tyrosine 180, and arginine 293.

This sequence belongs to the class I-like SAM-binding methyltransferase superfamily. CmoB family. As to quaternary structure, homotetramer.

The catalysed reaction is carboxy-S-adenosyl-L-methionine + 5-hydroxyuridine(34) in tRNA = 5-carboxymethoxyuridine(34) in tRNA + S-adenosyl-L-homocysteine + H(+). In terms of biological role, catalyzes carboxymethyl transfer from carboxy-S-adenosyl-L-methionine (Cx-SAM) to 5-hydroxyuridine (ho5U) to form 5-carboxymethoxyuridine (cmo5U) at position 34 in tRNAs. In Nautilia profundicola (strain ATCC BAA-1463 / DSM 18972 / AmH), this protein is tRNA U34 carboxymethyltransferase.